The following is a 579-amino-acid chain: DBIRD complex subunit ZNF326 (579 aa).

Positions 1-124 (MDFEDDYTHS…YRNSLDSFGG (124 aa)) are mediates transcriptional activation. Ser48, Ser56, Ser63, Ser69, Ser81, Ser82, Ser91, Ser106, Ser114, Ser118, Ser121, and Ser137 each carry phosphoserine. A Glycyl lysine isopeptide (Lys-Gly) (interchain with G-Cter in SUMO2) cross-link involves residue Lys140. Positions 154–194 (YSSYSSFSSPHMKPAPVGSRGRGTPAYPESTFGSRNYDAFG) are disordered. Residue Arg173 is modified to Omega-N-methylarginine. Phosphoserine is present on Ser212. An Omega-N-methylarginine modification is found at Arg235. The Bipartite nuclear localization signal signature appears at 238 to 260 (KRKMIQPFNKPGGTFIKKPKLAK). A Glycyl lysine isopeptide (Lys-Gly) (interchain with G-Cter in SUMO2) cross-link involves residue Lys240. An N6-acetyllysine; alternate modification is found at Lys247. A Glycyl lysine isopeptide (Lys-Gly) (interchain with G-Cter in SUMO2); alternate cross-link involves residue Lys247. Positions 248 to 302 (PGGTFIKKPKLAKPVEKMSLSKSPTKTDPKNEEEEKRRIEARREKQRRRREKNSE) are disordered. Thr251 is subject to Phosphothreonine. Glycyl lysine isopeptide (Lys-Gly) (interchain with G-Cter in SUMO2) cross-links involve residues Lys254 and Lys264. The residue at position 270 (Ser270) is a Phosphoserine. Residues 272 to 290 (TKTDPKNEEEEKRRIEARR) are compositionally biased toward basic and acidic residues. The C2H2 AKAP95-type 1 zinc-finger motif lies at 314-336 (CSFCKFRTFEEKDIELHLESASH). Lys401 is covalently cross-linked (Glycyl lysine isopeptide (Lys-Gly) (interchain with G-Cter in SUMO2)). The segment at 407-430 (CSACSVYIPALHSSVQQHLKSPDH) adopts a C2H2 AKAP95-type 2 zinc-finger fold. Glycyl lysine isopeptide (Lys-Gly) (interchain with G-Cter in SUMO2) cross-links involve residues Lys459 and Lys467. The tract at residues 470 to 579 (NPFEIQDHSQ…GFSVDQAEEN (110 aa)) is disordered. Composition is skewed to acidic residues over residues 483 to 520 (IEGDEEEEEKIDEPVEEEEEEEEEEEEVGEVEEAEEVG), 529 to 541 (GDTEEGGDVEGEG), and 549 to 565 (GEGEGEGVGEVEEEEAK).

It belongs to the AKAP95 family. Component of the DBIRD complex. Interacts with CCAR2; the interaction is direct.

The protein localises to the nucleus matrix. Its function is as follows. Core component of the DBIRD complex, a multiprotein complex that acts at the interface between core mRNP particles and RNA polymerase II (RNAPII) and integrates transcript elongation with the regulation of alternative splicing: the DBIRD complex affects local transcript elongation rates and alternative splicing of a large set of exons embedded in (A + T)-rich DNA regions. May play a role in neuronal differentiation and is able to bind DNA and activate expression in vitro. The protein is DBIRD complex subunit ZNF326 (ZNF326) of Bos taurus (Bovine).